The sequence spans 203 residues: Orotate phosphoribosyltransferase (203 aa).

Residues R94, K98, H100, and 120-128 (EDLISTGGS) contribute to the 5-phospho-alpha-D-ribose 1-diphosphate site. Position 124 (S124) interacts with orotate.

This sequence belongs to the purine/pyrimidine phosphoribosyltransferase family. PyrE subfamily. In terms of assembly, homodimer. The cofactor is Mg(2+).

The enzyme catalyses orotidine 5'-phosphate + diphosphate = orotate + 5-phospho-alpha-D-ribose 1-diphosphate. Its pathway is pyrimidine metabolism; UMP biosynthesis via de novo pathway; UMP from orotate: step 1/2. In terms of biological role, catalyzes the transfer of a ribosyl phosphate group from 5-phosphoribose 1-diphosphate to orotate, leading to the formation of orotidine monophosphate (OMP). This chain is Orotate phosphoribosyltransferase, found in Staphylococcus aureus (strain COL).